The primary structure comprises 238 residues: Fibroblast growth factor-binding protein 1 (238 aa).

An N-terminal signal peptide occupies residues 1–20 (MRIHGLILLSFLLLAAQVLS). Residues 25 to 61 (KTAKNVPDSTTEEDMSPSLGKARNKQRSRTSKSMTHG) are disordered. 3 cysteine pairs are disulfide-bonded: cysteine 71–cysteine 88, cysteine 97–cysteine 130, and cysteine 106–cysteine 142. Serine 164 carries O-linked (GalNAc...) serine glycosylation. Residues 197 to 238 (KDSECLEDPDVLTQRKTALEFCGESWSSFCTFFLNMLQATSC) form a sufficient for interaction with FGF2 and FGF2-induced effects region. 2 cysteine pairs are disulfide-bonded: cysteine 201/cysteine 238 and cysteine 218/cysteine 226.

It belongs to the fibroblast growth factor-binding protein family. Found in a complex with FGFBP1, FGF1 and FGF2. Interacts with FGF1, FGF2, FGF7, FGF10, FGF22 and HSPG2. In terms of tissue distribution, expressed in gut, eye, thymus, skin, lung, tongue, Purkinje cells and cerebral chorioid plexus (at protein level).

The protein resides in the secreted. Its subcellular location is the extracellular space. It is found in the cell membrane. In terms of biological role, acts as a carrier protein that release fibroblast-binding factors (FGFs) from the extracellular matrix (EM) storage and thus enhance the mitogenic activity of FGFs. Enhances FGF2 signaling during tissue repair, angiogenesis and in tumor growth. The protein is Fibroblast growth factor-binding protein 1 (Fgfbp1) of Rattus norvegicus (Rat).